The chain runs to 215 residues: Probable maleylacetoacetate isomerase (215 aa).

A GST N-terminal domain is found at M2–R85. Residues R90–C215 form the GST C-terminal domain.

It belongs to the GST superfamily. Zeta family.

It carries out the reaction 4-maleylacetoacetate = 4-fumarylacetoacetate. It functions in the pathway amino-acid degradation; L-phenylalanine degradation; acetoacetate and fumarate from L-phenylalanine: step 5/6. The sequence is that of Probable maleylacetoacetate isomerase (maiA) from Vibrio cholerae serotype O1 (strain ATCC 39315 / El Tor Inaba N16961).